The sequence spans 203 residues: Glycerol-3-phosphate acyltransferase (203 aa).

Helical transmembrane passes span 5–25 (IIYLLAYLIGAIPFGLLLAQI), 58–78 (TLAVATVILDALKGVLPILMA), 87–107 (ILWTMAVLAVFGHCFSPYLKF), 118–138 (GVLAVFLPFEIICALLAWFII), 150–170 (LGAMIVLIATSFIFHYDIPVI), and 176–196 (IFIIAFIVVYKHIPNILRLIG).

The protein belongs to the PlsY family. Probably interacts with PlsX.

Its subcellular location is the cell inner membrane. The enzyme catalyses an acyl phosphate + sn-glycerol 3-phosphate = a 1-acyl-sn-glycero-3-phosphate + phosphate. It functions in the pathway lipid metabolism; phospholipid metabolism. In terms of biological role, catalyzes the transfer of an acyl group from acyl-phosphate (acyl-PO(4)) to glycerol-3-phosphate (G3P) to form lysophosphatidic acid (LPA). This enzyme utilizes acyl-phosphate as fatty acyl donor, but not acyl-CoA or acyl-ACP. The chain is Glycerol-3-phosphate acyltransferase from Campylobacter lari (strain RM2100 / D67 / ATCC BAA-1060).